Consider the following 317-residue polypeptide: Methionyl-tRNA formyltransferase (317 aa).

A (6S)-5,6,7,8-tetrahydrofolate-binding site is contributed by 110 to 113 (SLLP). The segment at 292-317 (RMKGEDFVRGKNVQPGDVLGEANEEN) is disordered.

Belongs to the Fmt family.

It carries out the reaction L-methionyl-tRNA(fMet) + (6R)-10-formyltetrahydrofolate = N-formyl-L-methionyl-tRNA(fMet) + (6S)-5,6,7,8-tetrahydrofolate + H(+). In terms of biological role, attaches a formyl group to the free amino group of methionyl-tRNA(fMet). The formyl group appears to play a dual role in the initiator identity of N-formylmethionyl-tRNA by promoting its recognition by IF2 and preventing the misappropriation of this tRNA by the elongation apparatus. The sequence is that of Methionyl-tRNA formyltransferase from Bacillus velezensis (strain DSM 23117 / BGSC 10A6 / LMG 26770 / FZB42) (Bacillus amyloliquefaciens subsp. plantarum).